Here is a 142-residue protein sequence, read N- to C-terminus: Taurine up-regulated 1 protein (142 aa).

The first 40 residues, 1–40 (MARPPPLPGLVGRRSGRAVDRAIGWRLFLLLWHPALGAQA), serve as a signal peptide directing secretion. At 41–123 (RPPRRAPGGR…ARTQLEGQEG (83 aa)) the chain is on the extracellular side. Residues 124–140 (AGGWLVVGFLLCLFLLM) traverse the membrane as a helical segment. Over 141–142 (PP) the chain is Cytoplasmic.

In terms of tissue distribution, widely expressed in the adult with highest levels in placenta and testis. Also expressed in a number of embryonic tissues at multiple embryonic stages.

Its subcellular location is the nucleus membrane. The protein localises to the mitochondrion membrane. The protein resides in the cytoplasm. This Mus musculus (Mouse) protein is Taurine up-regulated 1 protein.